We begin with the raw amino-acid sequence, 102 residues long: Ferredoxin (102 aa).

4Fe-4S ferredoxin-type domains are found at residues 45–73 (VSVNINRYKCGYCGACVGVCPKGALELVE) and 74–102 (TWIEVDESTCIKCGICDRICPVGAIEVMK). The [4Fe-4S] cluster site is built by Cys-54, Cys-57, Cys-60, Cys-64, Cys-83, Cys-86, Cys-89, and Cys-93.

The cofactor is [4Fe-4S] cluster.

The protein operates within membrane lipid metabolism; glycerophospholipid metabolism. In terms of biological role, ferredoxin that is the specific electron donor for the geranylgeranyl reductase GGR involved in the biosynthesis of archaeal membrane lipids. This chain is Ferredoxin, found in Methanosarcina acetivorans (strain ATCC 35395 / DSM 2834 / JCM 12185 / C2A).